A 221-amino-acid chain; its full sequence is GDP-perosamine N-acetyltransferase (221 aa).

His-139 serves as the catalytic Proton acceptor.

Belongs to the transferase hexapeptide repeat family. Homotrimer.

It catalyses the reaction GDP-alpha-D-perosamine + acetyl-CoA = GDP-N-acetyl-alpha-D-perosamine + CoA + H(+). It participates in bacterial outer membrane biogenesis; LPS O-antigen biosynthesis. In terms of biological role, catalyzes the transfer of an acetyl residue from acetyl-CoA onto GDP-perosamine to form GDP-N-acetyl-perosamine. This Escherichia coli O157:H7 protein is GDP-perosamine N-acetyltransferase.